A 177-amino-acid polypeptide reads, in one-letter code: Large ribosomal subunit protein uL10 (177 aa).

The protein belongs to the universal ribosomal protein uL10 family. As to quaternary structure, part of the ribosomal stalk of the 50S ribosomal subunit. The N-terminus interacts with L11 and the large rRNA to form the base of the stalk. The C-terminus forms an elongated spine to which L12 dimers bind in a sequential fashion forming a multimeric L10(L12)X complex.

Forms part of the ribosomal stalk, playing a central role in the interaction of the ribosome with GTP-bound translation factors. The protein is Large ribosomal subunit protein uL10 of Xanthomonas campestris pv. campestris (strain 8004).